Here is an 89-residue protein sequence, read N- to C-terminus: Putative regulatory protein RBAM_015500 (89 aa).

It belongs to the RemA family.

The sequence is that of Putative regulatory protein RBAM_015500 from Bacillus velezensis (strain DSM 23117 / BGSC 10A6 / LMG 26770 / FZB42) (Bacillus amyloliquefaciens subsp. plantarum).